The following is a 921-amino-acid chain: Bifunctional aspartokinase/homoserine dehydrogenase, chloroplastic (921 aa).

The transit peptide at serine 1–proline 87 directs the protein to the chloroplast. Positions arginine 88–leucine 339 are aspartokinase. The interval serine 340 to isoleucine 567 is interface. ACT domains follow at residues valine 417 to asparagine 489 and threonine 498 to alanine 575. The tract at residues valine 568 to serine 921 is homoserine dehydrogenase. Residue isoleucine 573 coordinates NAD(+). Residues isoleucine 573, arginine 605, threonine 654, and lysine 678 each coordinate NADP(+). An NADPH-binding site is contributed by isoleucine 573. Residue threonine 654 coordinates NAD(+). Positions 654 and 678 each coordinate NADPH. The Na(+) site is built by glutamate 705, valine 708, alanine 710, and leucine 712. Residues glycine 763 and glutamate 766 each contribute to the NADP(+) site. L-homoserine-binding residues include glutamate 766 and aspartate 777. Lysine 781 serves as the catalytic Proton donor. Glycine 898 serves as a coordination point for NAD(+). Glycine 898 provides a ligand contact to NADP(+). Residue glycine 898 coordinates NADPH.

The protein in the N-terminal section; belongs to the aspartokinase family. In the C-terminal section; belongs to the homoserine dehydrogenase family. A metal cation serves as cofactor.

The protein resides in the plastid. Its subcellular location is the chloroplast. It catalyses the reaction L-homoserine + NADP(+) = L-aspartate 4-semialdehyde + NADPH + H(+). It carries out the reaction L-homoserine + NAD(+) = L-aspartate 4-semialdehyde + NADH + H(+). The enzyme catalyses L-aspartate + ATP = 4-phospho-L-aspartate + ADP. It participates in amino-acid biosynthesis; L-lysine biosynthesis via DAP pathway; (S)-tetrahydrodipicolinate from L-aspartate: step 1/4. Its pathway is amino-acid biosynthesis; L-methionine biosynthesis via de novo pathway; L-homoserine from L-aspartate: step 1/3. The protein operates within amino-acid biosynthesis; L-methionine biosynthesis via de novo pathway; L-homoserine from L-aspartate: step 3/3. It functions in the pathway amino-acid biosynthesis; L-threonine biosynthesis; L-threonine from L-aspartate: step 1/5. It participates in amino-acid biosynthesis; L-threonine biosynthesis; L-threonine from L-aspartate: step 3/5. In terms of biological role, bifunctional aspartate kinase and homoserine dehydrogenase that catalyzes the first and the third steps toward the synthesis of lysine, methionine and threonine from aspartate. The chain is Bifunctional aspartokinase/homoserine dehydrogenase, chloroplastic from Daucus carota (Wild carrot).